Reading from the N-terminus, the 108-residue chain is FK506-binding protein 1 (108 aa).

The region spanning Gly20–Asn108 is the PPIase FKBP-type domain.

This sequence belongs to the FKBP-type PPIase family. FKBP1 subfamily.

Its subcellular location is the cytoplasm. The catalysed reaction is [protein]-peptidylproline (omega=180) = [protein]-peptidylproline (omega=0). Its activity is regulated as follows. Inhibited by both FK506 and rapamycin. Functionally, PPIases accelerate the folding of proteins. It catalyzes the cis-trans isomerization of proline imidic peptide bonds in oligopeptides. In Cryptococcus neoformans var. neoformans serotype D (strain JEC21 / ATCC MYA-565) (Filobasidiella neoformans), this protein is FK506-binding protein 1 (FPR1).